A 438-amino-acid chain; its full sequence is Trigger factor (438 aa).

Residues 162–247 form the PPIase FKBP-type domain; it reads GDRVNINYQG…LNKVEAPKLP (86 aa).

Belongs to the FKBP-type PPIase family. Tig subfamily.

The protein resides in the cytoplasm. The catalysed reaction is [protein]-peptidylproline (omega=180) = [protein]-peptidylproline (omega=0). Involved in protein export. Acts as a chaperone by maintaining the newly synthesized protein in an open conformation. Functions as a peptidyl-prolyl cis-trans isomerase. This is Trigger factor from Nitrosomonas eutropha (strain DSM 101675 / C91 / Nm57).